A 651-amino-acid chain; its full sequence is Threonine--tRNA ligase (651 aa).

The TGS domain maps to 1 to 64; that stretch reads MSSVVHVTLP…EKDCTLQVLT (64 aa). The segment at 245–535 is catalytic; sequence DHRRLGPELG…LTEHYAGNFP (291 aa). Zn(2+) is bound by residues Cys-336, His-387, and His-512.

It belongs to the class-II aminoacyl-tRNA synthetase family. In terms of assembly, homodimer. Requires Zn(2+) as cofactor.

The protein localises to the cytoplasm. The catalysed reaction is tRNA(Thr) + L-threonine + ATP = L-threonyl-tRNA(Thr) + AMP + diphosphate + H(+). Functionally, catalyzes the attachment of threonine to tRNA(Thr) in a two-step reaction: L-threonine is first activated by ATP to form Thr-AMP and then transferred to the acceptor end of tRNA(Thr). Also edits incorrectly charged L-seryl-tRNA(Thr). This is Threonine--tRNA ligase from Symbiobacterium thermophilum (strain DSM 24528 / JCM 14929 / IAM 14863 / T).